The sequence spans 291 residues: Phosphatidylglycerol--prolipoprotein diacylglyceryl transferase (291 aa).

7 helical membrane-spanning segments follow: residues 21–41, 60–80, 96–116, 124–144, 198–218, 225–245, and 258–278; these read IALHWYGFMYLVGFVFAMWLA, LLYAGFAGVFVGGRLGYVLFY, WDGGMSFHGGLVGVICAMWWF, FLQVADFIAPLVPFGLGMGRI, SQLYEMALEGIVLFIILNLYI, GSVSGLFLIGYGIFRVIVEFF, and ISMGQILSIPMILAGILMMIW. Arginine 143 contacts a 1,2-diacyl-sn-glycero-3-phospho-(1'-sn-glycerol).

This sequence belongs to the Lgt family.

Its subcellular location is the cell inner membrane. It catalyses the reaction L-cysteinyl-[prolipoprotein] + a 1,2-diacyl-sn-glycero-3-phospho-(1'-sn-glycerol) = an S-1,2-diacyl-sn-glyceryl-L-cysteinyl-[prolipoprotein] + sn-glycerol 1-phosphate + H(+). It functions in the pathway protein modification; lipoprotein biosynthesis (diacylglyceryl transfer). Functionally, catalyzes the transfer of the diacylglyceryl group from phosphatidylglycerol to the sulfhydryl group of the N-terminal cysteine of a prolipoprotein, the first step in the formation of mature lipoproteins. In Photorhabdus laumondii subsp. laumondii (strain DSM 15139 / CIP 105565 / TT01) (Photorhabdus luminescens subsp. laumondii), this protein is Phosphatidylglycerol--prolipoprotein diacylglyceryl transferase.